The sequence spans 165 residues: Phosphopantetheine adenylyltransferase (165 aa).

Ser9 contacts substrate. Residues 9-10 and His17 each bind ATP; that span reads SF. Substrate is bound by residues Lys41, Leu73, and Lys87. ATP-binding positions include 88 to 90, Glu98, and 122 to 128; these read GLR and YSFLSSS.

This sequence belongs to the bacterial CoaD family. As to quaternary structure, homohexamer. Requires Mg(2+) as cofactor.

It is found in the cytoplasm. It catalyses the reaction (R)-4'-phosphopantetheine + ATP + H(+) = 3'-dephospho-CoA + diphosphate. It functions in the pathway cofactor biosynthesis; coenzyme A biosynthesis; CoA from (R)-pantothenate: step 4/5. In terms of biological role, reversibly transfers an adenylyl group from ATP to 4'-phosphopantetheine, yielding dephospho-CoA (dPCoA) and pyrophosphate. In Acidothermus cellulolyticus (strain ATCC 43068 / DSM 8971 / 11B), this protein is Phosphopantetheine adenylyltransferase.